We begin with the raw amino-acid sequence, 83 residues long: Mu-theraphotoxin-Hhn2k (83 aa).

The N-terminal stretch at 1–21 is a signal peptide; the sequence is MKASMFLALAGLVLLFVVDYA. Residues 22–48 constitute a propeptide that is removed on maturation; sequence SESEEKEFPIELLSKIFAVDVFKGEER. 3 disulfides stabilise this stretch: Cys-50–Cys-65, Cys-57–Cys-70, and Cys-64–Cys-77. Position 81 is a leucine amide (Leu-81).

This sequence belongs to the neurotoxin 10 (Hwtx-1) family. 15 (Hntx-3) subfamily. In terms of assembly, monomer. As to expression, expressed by the venom gland.

The protein localises to the secreted. Functionally, lethal neurotoxin. Selectively blocks tetrodotoxin-sensitive voltage-gated sodium channels (Nav). Does not affect tetrodotoxin-resistant voltage-gated sodium channels or calcium channels. The protein is Mu-theraphotoxin-Hhn2k of Cyriopagopus hainanus (Chinese bird spider).